A 127-amino-acid chain; its full sequence is DNA-directed RNA polymerases I, II, and III subunit RPABC2 (127 aa).

Residues 1–34 show a composition bias toward acidic residues; that stretch reads MSDNEDNFDGDDFDDVEEDEGLDDLENAEEEGQE. Residues 1-53 form a disordered region; sequence MSDNEDNFDGDDFDDVEEDEGLDDLENAEEEGQENVEILPSGERPQANQKRIT. Ser-2 carries the post-translational modification N-acetylserine. Ser-2 is subject to Phosphoserine; by CK2.

The protein belongs to the archaeal Rpo6/eukaryotic RPB6 RNA polymerase subunit family. Component of the RNA polymerase I (Pol I), RNA polymerase II (Pol II) and RNA polymerase III (Pol III) complexes consisting of at least 13, 12 and 17 subunits, respectively. Pol I complex consists of a ten-subunit catalytic core composed of POLR1A/RPA1, POLR1B/RPA2, POLR1C/RPAC1, POLR1D/RPAC2, POLR1H/RPA12, POLR2E/RPABC1, POLR2F/RPABC2, POLR2H/RPABC3, POLR2K/RPABC4 and POLR2L/RPABC5; a mobile stalk subunit POLR1F/RPA43 protruding from the core and additional subunits homologous to general transcription factors POLR1E/RPA49 and POLR1G/RPA34. Part of Pol I pre-initiation complex (PIC), in which Pol I core assembles with RRN3 and promoter-bound UTBF and SL1/TIF-IB complex. Pol II complex contains a ten-subunit catalytic core composed of POLR2A/RPB1, POLR2B/RPB2, POLR2C/RPB3, POLR2I/RPB9, POLR2J/RPB11, POLR2E/RPABC1, POLR2F/RPABC2, POLR2H/RPABC3, POLR2K/RPABC4 and POLR2L/RPABC5 and a mobile stalk composed of two subunits POLR2D/RPB4 and POLR2G/RPB7. Part of Pol II(G) complex, in which Pol II core associates with an additional subunit POLR2M; unlike conventional Pol II, Pol II(G) functions as a transcriptional repressor. Part of TBP-based Pol II pre-initiation complex (PIC), in which Pol II core assembles with general transcription factors and other specific initiation factors including GTF2E1, GTF2E2, GTF2F1, GTF2F2, TCEA1, ERCC2, ERCC3, GTF2H2, GTF2H3, GTF2H4, GTF2H5, GTF2A1, GTF2A2, GTF2B and TBP; this large multi-subunit PIC complex mediates DNA unwinding and targets Pol II core to the transcription start site where the first phosphodiester bond forms. Pol III complex consists of a ten-subunit catalytic core composed of POLR3A/RPC1, POLR3B/RPC2, POLR1C/RPAC1, POLR1D/RPAC2, POLR3K/RPC10, POLR2E/RPABC1, POLR2F/RPABC2, POLR2H/RPABC3, POLR2K/RPABC4 and POLR2L/RPABC5; a mobile stalk composed of two subunits POLR3H/RPC8 and CRCP/RPC9, protruding from the core and functioning primarily in transcription initiation; and additional subunits homologous to general transcription factors of the RNA polymerase II machinery, POLR3C/RPC3-POLR3F/RPC6-POLR3G/RPC7 heterotrimer required for transcription initiation and POLR3D/RPC4-POLR3E/RPC5 heterodimer involved in both transcription initiation and termination.

It is found in the nucleus. It localises to the nucleolus. Functionally, DNA-dependent RNA polymerase catalyzes the transcription of DNA into RNA using the four ribonucleoside triphosphates as substrates. Common component of RNA polymerases I, II, and III which synthesize ribosomal RNA precursors, mRNA precursors and many functional non-coding RNAs, and small RNAs, such as 5S rRNA and tRNAs, respectively. Pol II is the central component of the basal RNA polymerase II transcription machinery. Pols are composed of mobile elements that move relative to each other. In Pol II, POLR2F/RPABC2 is part of the clamp element and together with parts of POLR2A/RPB1 and POLR2B/RPB2 forms a pocket to which the POLR2D/RPB4-POLR2G/RPB7 subcomplex binds. The sequence is that of DNA-directed RNA polymerases I, II, and III subunit RPABC2 from Mus musculus (Mouse).